A 213-amino-acid chain; its full sequence is Small ribosomal subunit protein uS5 (213 aa).

The region spanning 49-112 (LEEEVMDVNL…DNAKYNLIKV (64 aa)) is the S5 DRBM domain.

This sequence belongs to the universal ribosomal protein uS5 family. In terms of assembly, part of the 30S ribosomal subunit. Contacts protein S4.

In terms of biological role, with S4 and S12 plays an important role in translational accuracy. In Methanobrevibacter smithii (strain ATCC 35061 / DSM 861 / OCM 144 / PS), this protein is Small ribosomal subunit protein uS5.